A 156-amino-acid polypeptide reads, in one-letter code: Arginine repressor (156 aa).

This sequence belongs to the ArgR family.

Its subcellular location is the cytoplasm. Its pathway is amino-acid biosynthesis; L-arginine biosynthesis [regulation]. In terms of biological role, regulates arginine biosynthesis genes. The polypeptide is Arginine repressor (Pectobacterium atrosepticum (strain SCRI 1043 / ATCC BAA-672) (Erwinia carotovora subsp. atroseptica)).